The following is a 319-amino-acid chain: Protease HtpX homolog (319 aa).

The next 2 membrane-spanning stretches (helical) occupy residues 6 to 26 and 28 to 48; these read TAMLLAFMTVLFMAVGYVIGG and GGMMIALVIAAGMNFFSYWNS. H130 provides a ligand contact to Zn(2+). Residue E131 is part of the active site. Position 134 (H134) interacts with Zn(2+). The next 2 helical transmembrane spans lie at 145 to 165 and 172 to 192; these read MTATLAGAISMLGNFAFFFGG and PLGFIGVLIAMIVAPLAAALV. Zn(2+) is bound at residue E201. Residues 280 to 319 are disordered; it reads EMSTGSTAPVRPDNAVRKSRSVPRTGWGRGGSEPPKGPWS.

It belongs to the peptidase M48B family. Requires Zn(2+) as cofactor.

The protein resides in the cell inner membrane. This Sinorhizobium medicae (strain WSM419) (Ensifer medicae) protein is Protease HtpX homolog.